Reading from the N-terminus, the 425-residue chain is Serine hydroxymethyltransferase (425 aa).

(6S)-5,6,7,8-tetrahydrofolate is bound by residues leucine 120 and 124-126 (GHL). Lysine 229 is modified (N6-(pyridoxal phosphate)lysine). 353 to 355 (SPF) provides a ligand contact to (6S)-5,6,7,8-tetrahydrofolate.

It belongs to the SHMT family. In terms of assembly, homodimer. Requires pyridoxal 5'-phosphate as cofactor.

It is found in the cytoplasm. It catalyses the reaction (6R)-5,10-methylene-5,6,7,8-tetrahydrofolate + glycine + H2O = (6S)-5,6,7,8-tetrahydrofolate + L-serine. It functions in the pathway one-carbon metabolism; tetrahydrofolate interconversion. The protein operates within amino-acid biosynthesis; glycine biosynthesis; glycine from L-serine: step 1/1. In terms of biological role, catalyzes the reversible interconversion of serine and glycine with tetrahydrofolate (THF) serving as the one-carbon carrier. This reaction serves as the major source of one-carbon groups required for the biosynthesis of purines, thymidylate, methionine, and other important biomolecules. Also exhibits THF-independent aldolase activity toward beta-hydroxyamino acids, producing glycine and aldehydes, via a retro-aldol mechanism. In Thermosynechococcus vestitus (strain NIES-2133 / IAM M-273 / BP-1), this protein is Serine hydroxymethyltransferase.